The following is a 154-amino-acid chain: Myoglobin (154 aa).

Positions 2–148 (GLSDGEWQLV…FRNDMAAQYK (147 aa)) constitute a Globin domain. S4 carries the post-translational modification Phosphoserine. H65 is a binding site for nitrite. Position 65 (H65) interacts with O2. T68 is modified (phosphothreonine). Residue H94 participates in heme b binding.

The protein belongs to the globin family. Monomeric.

It localises to the cytoplasm. It is found in the sarcoplasm. The catalysed reaction is Fe(III)-heme b-[protein] + nitric oxide + H2O = Fe(II)-heme b-[protein] + nitrite + 2 H(+). The enzyme catalyses H2O2 + AH2 = A + 2 H2O. Functionally, monomeric heme protein which primary function is to store oxygen and facilitate its diffusion within muscle tissues. Reversibly binds oxygen through a pentacoordinated heme iron and enables its timely and efficient release as needed during periods of heightened demand. Depending on the oxidative conditions of tissues and cells, and in addition to its ability to bind oxygen, it also has a nitrite reductase activity whereby it regulates the production of bioactive nitric oxide. Under stress conditions, like hypoxia and anoxia, it also protects cells against reactive oxygen species thanks to its pseudoperoxidase activity. This Bos mutus grunniens (Wild yak) protein is Myoglobin (MB).